The following is a 177-amino-acid chain: MLKDLYKSHIVPSLKTKLGYSNVMQVPKIVKVCLNIGLGIRGSDSKVMNSCVRDLALIAGQKPVATYAKKSIAGFKIRKGFPIGCKVTLRNNKMYEFLERLIHVVLPREQDFKGLSVSQFDGCGNLSIGIKEHISFLEIDYDKIDKILGVDINIVTNAVNNNDAKLLLMEFGFPFIN.

It belongs to the universal ribosomal protein uL5 family. In terms of assembly, part of the 50S ribosomal subunit; part of the 5S rRNA/L5/L18/L25 subcomplex. Contacts the 5S rRNA and the P site tRNA. Forms a bridge to the 30S subunit in the 70S ribosome.

This is one of the proteins that bind and probably mediate the attachment of the 5S RNA into the large ribosomal subunit, where it forms part of the central protuberance. In the 70S ribosome it contacts protein S13 of the 30S subunit (bridge B1b), connecting the 2 subunits; this bridge is implicated in subunit movement. Contacts the P site tRNA; the 5S rRNA and some of its associated proteins might help stabilize positioning of ribosome-bound tRNAs. This is Large ribosomal subunit protein uL5 from Ehrlichia chaffeensis (strain ATCC CRL-10679 / Arkansas).